Here is a 317-residue protein sequence, read N- to C-terminus: Protein-methionine-sulfoxide reductase catalytic subunit MsrP (317 aa).

Positions 1–40 form a signal peptide, tat-type signal; it reads MNKFTKTDVTPEKLFIQRRKIIQGMSVLSAAAAFPNLAAA. Mo-molybdopterin is bound by residues asparagine 72, 75-76, cysteine 129, threonine 164, asparagine 216, arginine 221, and 232-234; these read YE and SIK.

Belongs to the MsrP family. In terms of assembly, heterodimer of a catalytic subunit (MsrP) and a heme-binding subunit (MsrQ). Requires Mo-molybdopterin as cofactor. In terms of processing, predicted to be exported by the Tat system. The position of the signal peptide cleavage has not been experimentally proven.

It localises to the periplasm. It catalyses the reaction L-methionyl-[protein] + a quinone + H2O = L-methionyl-(S)-S-oxide-[protein] + a quinol. The catalysed reaction is L-methionyl-[protein] + a quinone + H2O = L-methionyl-(R)-S-oxide-[protein] + a quinol. In terms of biological role, part of the MsrPQ system that repairs oxidized periplasmic proteins containing methionine sulfoxide residues (Met-O), using respiratory chain electrons. Thus protects these proteins from oxidative-stress damage caused by reactive species of oxygen and chlorine generated by the host defense mechanisms. MsrPQ is essential for the maintenance of envelope integrity under bleach stress, rescuing a wide series of structurally unrelated periplasmic proteins from methionine oxidation. The catalytic subunit MsrP is non-stereospecific, being able to reduce both (R-) and (S-) diastereoisomers of methionine sulfoxide. This is Protein-methionine-sulfoxide reductase catalytic subunit MsrP from Actinobacillus succinogenes (strain ATCC 55618 / DSM 22257 / CCUG 43843 / 130Z).